Reading from the N-terminus, the 141-residue chain is Acetyltransferase YpeA (141 aa).

Positions 1–141 (MEIRVFRQED…GKRLIEDEEY (141 aa)) constitute an N-acetyltransferase domain.

The protein belongs to the acetyltransferase family. YpeA subfamily.

In Shigella boydii serotype 4 (strain Sb227), this protein is Acetyltransferase YpeA.